The primary structure comprises 256 residues: ATP synthase subunit a (256 aa).

The propeptide at 1–7 (MLNLFIT) is removed in mature form. 6 consecutive transmembrane segments (helical) span residues 33-53 (FTTF…LNLL), 92-112 (YFPL…ISMI), 122-142 (LIFI…IGLT), 148-168 (FFSL…LVLI), 188-208 (VLSG…LMSM), and 209-229 (SIIT…IVVL).

This sequence belongs to the ATPase A chain family. As to quaternary structure, F-type ATPases have 2 components, CF(1) - the catalytic core - and CF(0) - the membrane proton channel. CF(1) has five subunits: alpha(3), beta(3), gamma(1), delta(1), epsilon(1). CF(0) has three main subunits: a, b and c.

The protein resides in the mitochondrion inner membrane. In terms of biological role, mitochondrial membrane ATP synthase (F(1)F(0) ATP synthase or Complex V) produces ATP from ADP in the presence of a proton gradient across the membrane which is generated by electron transport complexes of the respiratory chain. F-type ATPases consist of two structural domains, F(1) - containing the extramembraneous catalytic core and F(0) - containing the membrane proton channel, linked together by a central stalk and a peripheral stalk. During catalysis, ATP synthesis in the catalytic domain of F(1) is coupled via a rotary mechanism of the central stalk subunits to proton translocation. Key component of the proton channel; it may play a direct role in the translocation of protons across the membrane. The sequence is that of ATP synthase subunit a (ATP6) from Kluyveromyces lactis (strain ATCC 8585 / CBS 2359 / DSM 70799 / NBRC 1267 / NRRL Y-1140 / WM37) (Yeast).